Reading from the N-terminus, the 415-residue chain is MSHIRHLAQQCRDAARRLATLSTDAKRRLLETMATALNTDAATILAANAADLDAARTQQVGTAMLDRLALDPQRLAAMADALRDIAALPDPVGQVTRDDQRPNGIHVQKIRVPLGVIAMIYEARPNVTADAAALCIKAGNGIILRGGSEAIRSNIAIATALQRALRLASLPETALILVQDMARHTMLELLQLSDLIDLVIPRGGEGLIRFVAEHARIPVIKHYKGVCHQFVDASADIEMAIRLLIDGKTTRPAACNALETLLVHTDIAPRFLPAAAAALRPYGVQLRGDHATCTLLPDVVLATDADYAAEYLDLILAIRIVPNVDAALEHIRRYGSDHTEVIVTADPAHADTFVQQLYSAVVMVNASSRFSDGGALGLGAEIGISTTRLHAYGPMGLDALTVERFVVRGQGQVRH.

The protein belongs to the gamma-glutamyl phosphate reductase family.

It localises to the cytoplasm. It carries out the reaction L-glutamate 5-semialdehyde + phosphate + NADP(+) = L-glutamyl 5-phosphate + NADPH + H(+). The protein operates within amino-acid biosynthesis; L-proline biosynthesis; L-glutamate 5-semialdehyde from L-glutamate: step 2/2. Its function is as follows. Catalyzes the NADPH-dependent reduction of L-glutamate 5-phosphate into L-glutamate 5-semialdehyde and phosphate. The product spontaneously undergoes cyclization to form 1-pyrroline-5-carboxylate. The protein is Gamma-glutamyl phosphate reductase of Xylella fastidiosa (strain 9a5c).